A 305-amino-acid polypeptide reads, in one-letter code: Spore coat protein CotA (305 aa).

Its subcellular location is the spore coat. It localises to the spore. The protein resides in the perispore. Contributes to maintain proper thickness of the spore coat. May contribute to the formation of polar appendages. May play an important role in assembly of the outer layers of the spore coat. The chain is Spore coat protein CotA from Clostridioides difficile (strain 630) (Peptoclostridium difficile).